The chain runs to 423 residues: Diaminobutyrate--2-oxoglutarate transaminase (423 aa).

Lys271 carries the post-translational modification N6-(pyridoxal phosphate)lysine.

It belongs to the class-III pyridoxal-phosphate-dependent aminotransferase family. The cofactor is pyridoxal 5'-phosphate.

It carries out the reaction L-2,4-diaminobutanoate + 2-oxoglutarate = L-aspartate 4-semialdehyde + L-glutamate. The protein operates within amine and polyamine biosynthesis; ectoine biosynthesis; L-ectoine from L-aspartate 4-semialdehyde: step 1/3. Functionally, catalyzes reversively the conversion of L-aspartate beta-semialdehyde (ASA) to L-2,4-diaminobutyrate (DABA) by transamination with L-glutamate. The protein is Diaminobutyrate--2-oxoglutarate transaminase (ectB) of Streptomyces coelicolor (strain ATCC BAA-471 / A3(2) / M145).